Here is a 397-residue protein sequence, read N- to C-terminus: Riboflavin biosynthesis protein RibBA (397 aa).

The DHBP synthase stretch occupies residues 1–199 (MFHRIEEALE…IEDLIAYRRH (199 aa)). Residues 26–27 (RE), D31, 138–142 (RAGHT), and E162 contribute to the D-ribulose 5-phosphate site. E27 is a Mg(2+) binding site. H141 lines the Mg(2+) pocket. Residues 200–397 (HETLVTREVE…VNKLGHLLNL (198 aa)) are GTP cyclohydrolase II. 250 to 254 (RVHSE) lines the GTP pocket. 3 residues coordinate Zn(2+): C255, C266, and C268. GTP is bound by residues Q271, 293–295 (EGR), and T315. Catalysis depends on D327, which acts as the Proton acceptor; for GTP cyclohydrolase activity. Catalysis depends on R329, which acts as the Nucleophile; for GTP cyclohydrolase activity. 2 residues coordinate GTP: T350 and K355.

In the N-terminal section; belongs to the DHBP synthase family. This sequence in the C-terminal section; belongs to the GTP cyclohydrolase II family. The cofactor is Mg(2+). Requires Mn(2+) as cofactor. Zn(2+) serves as cofactor.

The enzyme catalyses D-ribulose 5-phosphate = (2S)-2-hydroxy-3-oxobutyl phosphate + formate + H(+). The catalysed reaction is GTP + 4 H2O = 2,5-diamino-6-hydroxy-4-(5-phosphoribosylamino)-pyrimidine + formate + 2 phosphate + 3 H(+). It functions in the pathway cofactor biosynthesis; riboflavin biosynthesis; 2-hydroxy-3-oxobutyl phosphate from D-ribulose 5-phosphate: step 1/1. The protein operates within cofactor biosynthesis; riboflavin biosynthesis; 5-amino-6-(D-ribitylamino)uracil from GTP: step 1/4. Functionally, catalyzes the conversion of D-ribulose 5-phosphate to formate and 3,4-dihydroxy-2-butanone 4-phosphate. Catalyzes the conversion of GTP to 2,5-diamino-6-ribosylamino-4(3H)-pyrimidinone 5'-phosphate (DARP), formate and pyrophosphate. This is Riboflavin biosynthesis protein RibBA from Bacillus cereus (strain AH187).